A 251-amino-acid polypeptide reads, in one-letter code: 1-(5-phosphoribosyl)-5-[(5-phosphoribosylamino)methylideneamino] imidazole-4-carboxamide isomerase (251 aa).

The Proton acceptor role is filled by Asp-8. The Proton donor role is filled by Asp-129.

It belongs to the HisA/HisF family.

Its subcellular location is the cytoplasm. It carries out the reaction 1-(5-phospho-beta-D-ribosyl)-5-[(5-phospho-beta-D-ribosylamino)methylideneamino]imidazole-4-carboxamide = 5-[(5-phospho-1-deoxy-D-ribulos-1-ylimino)methylamino]-1-(5-phospho-beta-D-ribosyl)imidazole-4-carboxamide. Its pathway is amino-acid biosynthesis; L-histidine biosynthesis; L-histidine from 5-phospho-alpha-D-ribose 1-diphosphate: step 4/9. This Desulfosudis oleivorans (strain DSM 6200 / JCM 39069 / Hxd3) (Desulfococcus oleovorans) protein is 1-(5-phosphoribosyl)-5-[(5-phosphoribosylamino)methylideneamino] imidazole-4-carboxamide isomerase.